We begin with the raw amino-acid sequence, 958 residues long: Glycine dehydrogenase (decarboxylating) (958 aa).

At lysine 708 the chain carries N6-(pyridoxal phosphate)lysine.

It belongs to the GcvP family. In terms of assembly, the glycine cleavage system is composed of four proteins: P, T, L and H. It depends on pyridoxal 5'-phosphate as a cofactor.

The enzyme catalyses N(6)-[(R)-lipoyl]-L-lysyl-[glycine-cleavage complex H protein] + glycine + H(+) = N(6)-[(R)-S(8)-aminomethyldihydrolipoyl]-L-lysyl-[glycine-cleavage complex H protein] + CO2. Its function is as follows. The glycine cleavage system catalyzes the degradation of glycine. The P protein binds the alpha-amino group of glycine through its pyridoxal phosphate cofactor; CO(2) is released and the remaining methylamine moiety is then transferred to the lipoamide cofactor of the H protein. This Proteus mirabilis (strain HI4320) protein is Glycine dehydrogenase (decarboxylating).